Reading from the N-terminus, the 393-residue chain is Decapping nuclease dom-3 (393 aa).

The interval 1–37 is disordered; it reads MSHYGGNPRGNSSHQFGRKDFQQSDSKHIPKITGQPL. Residues 17-28 show a composition bias toward basic and acidic residues; sequence GRKDFQQSDSKH. Residues Arg74, Glu113, and 144–146 contribute to the substrate site; that span reads WRG. Mg(2+) is bound by residues Glu205, Glu257, Asp259, Glu269, and Leu270. Glu257 provides a ligand contact to substrate. The substrate site is built by Lys271 and Gln293.

This sequence belongs to the DXO/Dom3Z family. Mg(2+) serves as cofactor.

The catalysed reaction is a 5'-end NAD(+)-phospho-ribonucleoside in mRNA + H2O = a 5'-end phospho-ribonucleoside in mRNA + NAD(+) + H(+). It catalyses the reaction a 5'-end (N(7)-methyl 5'-triphosphoguanosine)-ribonucleoside-ribonucleotide in mRNA + H2O = a (N(7)-methyl 5'-triphosphoguanosine)-nucleoside + a 5'-end phospho-ribonucleoside in mRNA + H(+). The enzyme catalyses a 5'-end triphospho-ribonucleoside in mRNA + H2O = a 5'-end phospho-ribonucleoside in mRNA + diphosphate + H(+). In terms of biological role, decapping enzyme for NAD-capped RNAs: specifically hydrolyzes the nicotinamide adenine dinucleotide (NAD) cap from a subset of RNAs by removing the entire NAD moiety from the 5'-end of an NAD-capped RNA. The NAD-cap is present at the 5'-end of some RNAs and snoRNAs. In contrast to the canonical 5'-end N7 methylguanosine (m7G) cap, the NAD cap promotes mRNA decay. Also acts as a non-canonical decapping enzyme that removes the entire cap structure of m7G capped or incompletely capped RNAs and mediates their subsequent degradation. Specifically degrades pre-mRNAs with a defective 5'-end m7G cap and is part of a pre-mRNA capping quality control. Also possesses RNA 5'-pyrophosphohydrolase activity by hydrolyzing the 5'-end triphosphate to release pyrophosphates. The sequence is that of Decapping nuclease dom-3 from Caenorhabditis elegans.